The primary structure comprises 149 residues: Large ribosomal subunit protein bL9 (149 aa).

This sequence belongs to the bacterial ribosomal protein bL9 family.

In terms of biological role, binds to the 23S rRNA. The protein is Large ribosomal subunit protein bL9 of Enterobacter sp. (strain 638).